The sequence spans 158 residues: Crossover junction endodeoxyribonuclease RuvC (158 aa).

Residues Asp7, Glu66, and Asp139 contribute to the active site. Mg(2+) is bound by residues Asp7, Glu66, and Asp139.

Belongs to the RuvC family. As to quaternary structure, homodimer which binds Holliday junction (HJ) DNA. The HJ becomes 2-fold symmetrical on binding to RuvC with unstacked arms; it has a different conformation from HJ DNA in complex with RuvA. In the full resolvosome a probable DNA-RuvA(4)-RuvB(12)-RuvC(2) complex forms which resolves the HJ. The cofactor is Mg(2+).

The protein localises to the cytoplasm. The enzyme catalyses Endonucleolytic cleavage at a junction such as a reciprocal single-stranded crossover between two homologous DNA duplexes (Holliday junction).. The RuvA-RuvB-RuvC complex processes Holliday junction (HJ) DNA during genetic recombination and DNA repair. Endonuclease that resolves HJ intermediates. Cleaves cruciform DNA by making single-stranded nicks across the HJ at symmetrical positions within the homologous arms, yielding a 5'-phosphate and a 3'-hydroxyl group; requires a central core of homology in the junction. The consensus cleavage sequence is 5'-(A/T)TT(C/G)-3'. Cleavage occurs on the 3'-side of the TT dinucleotide at the point of strand exchange. HJ branch migration catalyzed by RuvA-RuvB allows RuvC to scan DNA until it finds its consensus sequence, where it cleaves and resolves the cruciform DNA. The polypeptide is Crossover junction endodeoxyribonuclease RuvC (Campylobacter jejuni subsp. jejuni serotype O:6 (strain 81116 / NCTC 11828)).